Reading from the N-terminus, the 48-residue chain is Delta-stichotoxin-She1a (48 aa).

Cystine bridges form between Cys3/Cys43, Cys5/Cys33, and Cys26/Cys44.

This sequence belongs to the sea anemone sodium channel inhibitory toxin family. Type II subfamily.

It is found in the secreted. The protein resides in the nematocyst. Its function is as follows. Binds specifically to voltage-gated sodium channels (Nav), thereby delaying their inactivation during signal transduction. Is highly toxic to crabs (by intrahemocoelic injection), but without effect upon mice (by intraperitoneal injection). The protein is Delta-stichotoxin-She1a of Stichodactyla helianthus (Sun anemone).